The chain runs to 931 residues: Protein translocase subunit SecA (931 aa).

ATP is bound by residues Gln-87, 105–109 (GEGKT), and Asp-523. Residues Cys-915, Cys-917, Cys-926, and His-927 each contribute to the Zn(2+) site.

Belongs to the SecA family. In terms of assembly, monomer and homodimer. Part of the essential Sec protein translocation apparatus which comprises SecA, SecYEG and auxiliary proteins SecDF-YajC and YidC. The cofactor is Zn(2+).

The protein resides in the cell inner membrane. It is found in the cytoplasm. The enzyme catalyses ATP + H2O + cellular proteinSide 1 = ADP + phosphate + cellular proteinSide 2.. Functionally, part of the Sec protein translocase complex. Interacts with the SecYEG preprotein conducting channel. Has a central role in coupling the hydrolysis of ATP to the transfer of proteins into and across the cell membrane, serving both as a receptor for the preprotein-SecB complex and as an ATP-driven molecular motor driving the stepwise translocation of polypeptide chains across the membrane. The protein is Protein translocase subunit SecA of Xanthobacter autotrophicus (strain ATCC BAA-1158 / Py2).